Reading from the N-terminus, the 244-residue chain is Small ribosomal subunit protein uS2 (244 aa).

Belongs to the universal ribosomal protein uS2 family.

The sequence is that of Small ribosomal subunit protein uS2 from Psychromonas ingrahamii (strain DSM 17664 / CCUG 51855 / 37).